Consider the following 367-residue polypeptide: NADH-ubiquinone oxidoreductase chain 1 (367 aa).

10 helical membrane-spanning segments follow: residues 5 to 25 (IIIS…GIAY), 43 to 63 (PNFV…KLLL), 74 to 94 (IILF…GYAV), 108 to 128 (LGIY…LLAG), 152 to 172 (LVLS…NLSV), 179 to 199 (AIWN…GSVA), 225 to 245 (AVVF…MCIL), 265 to 285 (FFYS…NIFY), 301 to 321 (LIYG…FIWV), and 336 to 356 (FCWT…PCIL).

The protein belongs to the complex I subunit 1 family.

It localises to the mitochondrion inner membrane. The enzyme catalyses a ubiquinone + NADH + 5 H(+)(in) = a ubiquinol + NAD(+) + 4 H(+)(out). Functionally, core subunit of the mitochondrial membrane respiratory chain NADH dehydrogenase (Complex I) that is believed to belong to the minimal assembly required for catalysis. Complex I functions in the transfer of electrons from NADH to the respiratory chain. The immediate electron acceptor for the enzyme is believed to be ubiquinone. This Podospora anserina (strain S / ATCC MYA-4624 / DSM 980 / FGSC 10383) (Pleurage anserina) protein is NADH-ubiquinone oxidoreductase chain 1 (ND1).